A 648-amino-acid chain; its full sequence is Beta-glucuronidase (648 aa).

The N-terminal stretch at 1 to 22 is a signal peptide; the sequence is MSPRRSVCWFVLGQLLCSCAVA. 2 N-linked (GlcNAc...) asparagine glycosylation sites follow: asparagine 172 and asparagine 416. The active-site Proton donor is glutamate 447. Asparagine 627 is a glycosylation site (N-linked (GlcNAc...) asparagine).

This sequence belongs to the glycosyl hydrolase 2 family. Homotetramer. In terms of processing, undergoes a post-transcriptional proteolytic cleavage near its C-terminal end, which reduces its size by approximately 3 kDa. The site of this cleavage has as yet not been determined.

The protein localises to the lysosome. It carries out the reaction a beta-D-glucuronoside + H2O = D-glucuronate + an alcohol. Inhibited by L-aspartic acid. Functionally, plays an important role in the degradation of dermatan and keratan sulfates. In Rattus norvegicus (Rat), this protein is Beta-glucuronidase (Gusb).